A 482-amino-acid polypeptide reads, in one-letter code: Early growth response protein 4 (482 aa).

The interval 274 to 357 is disordered; sequence DLGEGAESLP…PPAKARRKGR (84 aa). The span at 280–290 shows a compositional bias: low complexity; the sequence is ESLPGLLTPPS. Residues 291 to 302 are compositionally biased toward gly residues; the sequence is GEGGSSGEGGEF. Pro residues predominate over residues 337–349; sequence PEPPVPPPAPFPP. C2H2-type zinc fingers lie at residues 376-400, 406-428, and 434-456; these read FACP…LRIH, FQCR…VRTH, and FACD…SKVH.

It belongs to the EGR C2H2-type zinc-finger protein family. In terms of tissue distribution, expressed in brain. In the cerebellum and frontal cortex.

Its subcellular location is the nucleus. Transcriptional regulator. Recognizes and binds to the DNA sequence 5'-GCGGGGGCG-3' (GSG). Activates the transcription of target genes whose products are required for mitogenesis and differentiation. The chain is Early growth response protein 4 (EGR4) from Bos taurus (Bovine).